A 355-amino-acid polypeptide reads, in one-letter code: Homeotic protein knotted-1 (355 aa).

A disordered region spans residues 205–233; the sequence is KCEGVGSSEEDQDNSGGETELPEIDPRAE. Residues 236–256 enclose the ELK domain; that stretch reads ELKNHLLRKYSGYLSSLKQEL. The segment at residues 257–320 is a DNA-binding region (homeobox; TALE-type); the sequence is SKKKKKGKLP…NQRKRHWKPS (64 aa).

It belongs to the TALE/KNOX homeobox family. In terms of tissue distribution, expressed in the apical meristems, in the newly emerged lateral primordia in the floral bud, in their vascular bundles and in the cortex parenchyma of the floral pedicle. Also present in the lateral tips of leaf primordia.

Its subcellular location is the nucleus. Its function is as follows. Appears to be involved in meristem formation and in the regulation of leaf morphology. Misexpression makes the leaf more compound which is always associated with growth retardation and loss of apical dominance, resulting in dwarfed, bushy plants. Probably binds to the DNA sequence 5'-TGAC-3'. This Solanum lycopersicum (Tomato) protein is Homeotic protein knotted-1 (KN1).